The chain runs to 274 residues: 4-diphosphocytidyl-2-C-methyl-D-erythritol kinase (274 aa).

Lysine 9 is a catalytic residue. Residue 91–101 (PAGAGLGGGSS) coordinates ATP. Aspartate 133 is an active-site residue.

This sequence belongs to the GHMP kinase family. IspE subfamily.

The catalysed reaction is 4-CDP-2-C-methyl-D-erythritol + ATP = 4-CDP-2-C-methyl-D-erythritol 2-phosphate + ADP + H(+). The protein operates within isoprenoid biosynthesis; isopentenyl diphosphate biosynthesis via DXP pathway; isopentenyl diphosphate from 1-deoxy-D-xylulose 5-phosphate: step 3/6. Its function is as follows. Catalyzes the phosphorylation of the position 2 hydroxy group of 4-diphosphocytidyl-2C-methyl-D-erythritol. The chain is 4-diphosphocytidyl-2-C-methyl-D-erythritol kinase from Persephonella marina (strain DSM 14350 / EX-H1).